An 80-amino-acid polypeptide reads, in one-letter code: Kunitz-type serine protease inhibitor LmKTT-1a (80 aa).

The first 21 residues, 1–21 (MKSFLLIALVLFFLFVSYASA), serve as a signal peptide directing secretion. One can recognise a BPTI/Kunitz inhibitor domain in the interval 25-75 (CQLPSDVGKGKASFTRYYYNEESGKCETFIYGGVGGNSNNFLTKEDCCREC). 3 disulfides stabilise this stretch: cysteine 25–cysteine 75, cysteine 50–cysteine 71, and cysteine 72–cysteine 80.

It belongs to the venom Kunitz-type family. Scorpion delta-Ktx subfamily. Delta-Ktx 2 sub-subfamily. Post-translationally, lacks the conserved CysII-CysIV disulfide bond but contains 2 cysteine residues at the C-terminus that generate a new disulfide bond. Expressed by the venom gland.

Its subcellular location is the secreted. Serine protease inhibitor that inhibits trypsin at a molar ratio of 1:1 (Ki=140 nM). This chain is Kunitz-type serine protease inhibitor LmKTT-1a, found in Lychas mucronatus (Chinese swimming scorpion).